A 583-amino-acid chain; its full sequence is 2-succinyl-5-enolpyruvyl-6-hydroxy-3-cyclohexene-1-carboxylate synthase (583 aa).

The protein belongs to the TPP enzyme family. MenD subfamily. As to quaternary structure, homodimer. The cofactor is Mg(2+). Mn(2+) serves as cofactor. Thiamine diphosphate is required as a cofactor.

The enzyme catalyses isochorismate + 2-oxoglutarate + H(+) = 5-enolpyruvoyl-6-hydroxy-2-succinyl-cyclohex-3-ene-1-carboxylate + CO2. It functions in the pathway quinol/quinone metabolism; 1,4-dihydroxy-2-naphthoate biosynthesis; 1,4-dihydroxy-2-naphthoate from chorismate: step 2/7. The protein operates within quinol/quinone metabolism; menaquinone biosynthesis. Functionally, catalyzes the thiamine diphosphate-dependent decarboxylation of 2-oxoglutarate and the subsequent addition of the resulting succinic semialdehyde-thiamine pyrophosphate anion to isochorismate to yield 2-succinyl-5-enolpyruvyl-6-hydroxy-3-cyclohexene-1-carboxylate (SEPHCHC). The chain is 2-succinyl-5-enolpyruvyl-6-hydroxy-3-cyclohexene-1-carboxylate synthase from Chlorobium chlorochromatii (strain CaD3).